We begin with the raw amino-acid sequence, 1657 residues long: Ras GTPase-activating-like protein IQGAP1 (1657 aa).

Serine 2 is modified (N-acetylserine). Serine 2 is subject to Phosphoserine. Residues 44–159 form the Calponin-homology (CH) domain; the sequence is LCHLEEAKRW…YCIHALSLYL (116 aa). Tyrosine 172 is subject to Phosphotyrosine. Serine 330 is subject to Phosphoserine. The WW domain maps to 685–710; the sequence is WVKHWVKGGYHYYHNLETQAGGWAEP. IQ domains lie at 745-774, 775-804, 805-834, and 835-864; these read NEGLITKLQACCRGYLVRQEFRSRMNFLKK, QIPAITCIQSQWRGYKQKKAYQDRLAYLHS, HKDEVVKIQSLARMHQARKRYRDRLQYFRD, and HINDIIKIQAFIRANKARDDYKTLINAEDP. The interval 956–1274 is C1; it reads GGLKALSKEK…FFQVACDVPE (319 aa). A Ras-GAP domain is found at 1020–1269; that stretch reads YLLLRLFQTA…QKFRRFFQVA (250 aa). Residues 1276-1657 are C2; that stretch reads QDKFNVDEYS…FLLNKKFYGK (382 aa). Position 1441 is a phosphoserine (serine 1441).

In terms of assembly, interacts with CDC42; the interaction is demonstrated with IQGAP1 in GTP-bound and in nucleotide-free state. Interacts with RAC1. Does not interact with RHOA. Interacts with TSG101. Interacts with PAK6. Interacts with SASH1. Interacts with PJVK. Interacts with SLC26A4. This interaction enhances the chloride-bicarbonate exchange activity of SLC26A4. Interacts with SVEP1. Interacts with ILK; the interaction is required for localization of IQGAP to the cell cortex. As to quaternary structure, (Microbial infection) In case of infection, interacts with S.typhimurium protein sseI. In terms of tissue distribution, expressed in the kidney (at protein level).

It localises to the cell membrane. It is found in the nucleus. The protein resides in the cytoplasm. The protein localises to the cell cortex. Its subcellular location is the apical cell membrane. It localises to the basolateral cell membrane. Plays a crucial role in regulating the dynamics and assembly of the actin cytoskeleton. Recruited to the cell cortex by interaction with ILK which allows it to cooperate with its effector DIAPH1 to locally stabilize microtubules and allow stable insertion of caveolae into the plasma membrane. Binds to activated CDC42 but does not stimulate its GTPase activity. Associates with calmodulin. May promote neurite outgrowth. May play a possible role in cell cycle regulation by contributing to cell cycle progression after DNA replication arrest. This Mus musculus (Mouse) protein is Ras GTPase-activating-like protein IQGAP1 (Iqgap1).